Consider the following 176-residue polypeptide: Tubulin polymerization-promoting protein family member 3 (176 aa).

Residue Ala-2 is modified to N-acetylalanine. Residues 132-152 (TGSHKERFDESGKGKGIAGRQ) are disordered. Residues 134 to 144 (SHKERFDESGK) show a composition bias toward basic and acidic residues.

It belongs to the TPPP family. As to expression, expressed in endometrium during the mid-secretory phase (LH + 7) (at protein level).

Its subcellular location is the cytoplasm. It is found in the cytoskeleton. Functionally, regulator of microtubule dynamic that has microtubule bundling activity. Required for embryo implantation; possibly by regulating beta-catenin. Also required for decidualization via regulation of beta-catenin. The polypeptide is Tubulin polymerization-promoting protein family member 3 (Homo sapiens (Human)).